A 214-amino-acid chain; its full sequence is Nigrelysin (214 aa).

A signal peptide spans methionine 1 to alanine 21. The propeptide occupies leucine 22–arginine 35. The plays an important role in the hemolytic activity stretch occupies residues glutamate 38–alanine 47. The N-terminal region stretch occupies residues glycine 46–serine 65. 7 residues coordinate phosphocholine: serine 89, valine 122, serine 140, proline 142, tyrosine 168, tyrosine 172, and tyrosine 173. The interval serine 140 to lysine 155 is trp-rich region, which is important for the binding to lipid membrane. The Cell attachment site, crucial for protein stability signature appears at lysine 179–aspartate 181.

The protein belongs to the actinoporin family. Sea anemone subfamily. As to quaternary structure, octamer or nonamer in membranes. Monomer in the soluble state.

The protein resides in the secreted. Its subcellular location is the nematocyst. It localises to the target cell membrane. Its function is as follows. Pore-forming protein that forms cation-selective hydrophilic pores in cell membranes and causes cytolysis. Pore formation is a multi-step process that involves specific recognition of membrane sphingomyelin (but neither cholesterol nor phosphatidylcholine) using aromatic rich region and adjacent phosphocholine (POC) binding site, firm binding to the membrane (mainly driven by hydrophobic interactions) accompanied by the transfer of the N-terminal region to the lipid-water interface and finally pore formation after oligomerization of monomers. This protein shows potent hemolytic activity (EC(50)=0.09 nM), as well as potent cytotoxic activity on nucleated cells (L1210 cells). The cytotoxic process starts with cellular swelling that is time and dose dependent and occurs up to a critical volume, probably due to influx of water via pores opened by this actinoporin. The second phase consists of the final loss of membrane integrity that leads to cytolysis. This Anthopleura nigrescens (Sea anemone) protein is Nigrelysin.